A 231-amino-acid chain; its full sequence is Probable GTP-binding protein EngB (231 aa).

An EngB-type G domain is found at 51-231; that stretch reads DLSEIAFAGR…RAQLAALASP (181 aa). GTP contacts are provided by residues 59-66, 86-90, 109-112, 176-179, and 210-212; these read GRSNVGKS, GRTQE, DLPG, TKAD, and TSS. Positions 66 and 88 each coordinate Mg(2+).

It belongs to the TRAFAC class TrmE-Era-EngA-EngB-Septin-like GTPase superfamily. EngB GTPase family. Mg(2+) serves as cofactor.

Functionally, necessary for normal cell division and for the maintenance of normal septation. This chain is Probable GTP-binding protein EngB, found in Rhodospirillum rubrum (strain ATCC 11170 / ATH 1.1.1 / DSM 467 / LMG 4362 / NCIMB 8255 / S1).